The sequence spans 351 residues: Ferrochelatase (351 aa).

H221 and E302 together coordinate Fe cation.

It belongs to the ferrochelatase family.

Its subcellular location is the cytoplasm. It catalyses the reaction heme b + 2 H(+) = protoporphyrin IX + Fe(2+). It participates in porphyrin-containing compound metabolism; protoheme biosynthesis; protoheme from protoporphyrin-IX: step 1/1. Functionally, catalyzes the ferrous insertion into protoporphyrin IX. This is Ferrochelatase from Bradyrhizobium sp. (strain BTAi1 / ATCC BAA-1182).